The sequence spans 218 residues: Large ribosomal subunit protein uL3 (218 aa).

It belongs to the universal ribosomal protein uL3 family. Part of the 50S ribosomal subunit. Forms a cluster with proteins L14 and L19.

In terms of biological role, one of the primary rRNA binding proteins, it binds directly near the 3'-end of the 23S rRNA, where it nucleates assembly of the 50S subunit. The polypeptide is Large ribosomal subunit protein uL3 (Mycolicibacterium gilvum (strain PYR-GCK) (Mycobacterium gilvum (strain PYR-GCK))).